A 198-amino-acid chain; its full sequence is Thymidine kinase (198 aa).

ATP contacts are provided by residues 9–16 (STMNAGKS) and 87–90 (DEAQ). E88 (proton acceptor) is an active-site residue. Residues C145, C147, C182, and H185 each coordinate Zn(2+).

It belongs to the thymidine kinase family. As to quaternary structure, homotetramer.

The protein localises to the cytoplasm. The catalysed reaction is thymidine + ATP = dTMP + ADP + H(+). The polypeptide is Thymidine kinase (Ruegeria pomeroyi (strain ATCC 700808 / DSM 15171 / DSS-3) (Silicibacter pomeroyi)).